A 371-amino-acid polypeptide reads, in one-letter code: Spermatogenic leucine zipper protein 1 (371 aa).

Coiled coils occupy residues glutamate 96–aspartate 148 and phenylalanine 177–glutamate 289. At serine 98 the chain carries Phosphoserine. The segment at isoleucine 110 to alanine 120 is helix-loop-helix motif. Residues serine 121–arginine 188 form a basic motif region. Residue serine 202 is modified to Phosphoserine. Positions lysine 223 to serine 240 are enriched in polar residues. The segment at lysine 223–glutamate 246 is disordered. The segment at leucine 245–leucine 266 is leucine-zipper.

Post-translationally, phosphorylated by MAPK1/ERK2 and MAPK3/ERK1.

The protein localises to the cytoplasm. It is found in the nucleus. Functionally, transcription factor that binds to the DNA sequence 5'-CANNTG-3'(E box) and the G-box motif. May play an important role in the regulation of cell proliferation and differentiation during spermatogenesis. This Bos taurus (Bovine) protein is Spermatogenic leucine zipper protein 1 (SPZ1).